The chain runs to 475 residues: MSPKTETKASVGFQAGVKDYRLTYYTPEYQTKDTDILAAFRVTPQPGVPPEEAGAAVAAESSTGTWTTVWTDGLTSLDRYKGRCYDLEPVPGEDNQYIAYVAYPLDLFEEGSVTNMFTSIVGNVFGFKALRALRLEDLRIPTSYIKTFQGPPHGIQVERDKLNKYGRPLLGCTIKPKLGLSAKNYGRAVYECLRGGLDFTKDDENVNSQPFMRWRDRFVFCAEAIYKAQAETGEIKGHYLNATAGTCEEMIKRAVFARELGVPIVMHDYLTGGFTANTTLAHYCRDNGLLLHIHRAMHAVIDRQKNHGMHFRVLAKALRMSGGDHIHAGTVVGKLEGEREITLGFVDLLRDDFIEKDRSRGIYFTQDWVSMPGVMPVASGGIHVWHMPALTDIFGDDAVLQFGGGTLGHPWGNAPGAVANRVALEACVQARNEGRDLAREGNEVIREAAKWSPELAAACEVWKEIKFEFESVDTL.

Positions 1-2 (MS) are excised as a propeptide. At P3 the chain carries N-acetylproline. N123 and T173 together coordinate substrate. K175 acts as the Proton acceptor in catalysis. K177 is a substrate binding site. Mg(2+) contacts are provided by K201, D203, and E204. Position 201 is an N6-carboxylysine (K201). H294 functions as the Proton acceptor in the catalytic mechanism. Positions 295, 327, and 379 each coordinate substrate.

The protein belongs to the RuBisCO large chain family. Type I subfamily. In terms of assembly, heterohexadecamer of 8 large chains and 8 small chains; disulfide-linked. The disulfide link is formed within the large subunit homodimers. It depends on Mg(2+) as a cofactor. The disulfide bond which can form in the large chain dimeric partners within the hexadecamer appears to be associated with oxidative stress and protein turnover.

It localises to the plastid. The protein localises to the chloroplast. It carries out the reaction 2 (2R)-3-phosphoglycerate + 2 H(+) = D-ribulose 1,5-bisphosphate + CO2 + H2O. The catalysed reaction is D-ribulose 1,5-bisphosphate + O2 = 2-phosphoglycolate + (2R)-3-phosphoglycerate + 2 H(+). Functionally, ruBisCO catalyzes two reactions: the carboxylation of D-ribulose 1,5-bisphosphate, the primary event in carbon dioxide fixation, as well as the oxidative fragmentation of the pentose substrate in the photorespiration process. Both reactions occur simultaneously and in competition at the same active site. This is Ribulose bisphosphate carboxylase large chain from Welwitschia mirabilis (Tree tumbo).